The sequence spans 538 residues: Pentachlorophenol 4-monooxygenase (538 aa).

Residues 16–45 (AVLIVGGGPTGLIAANELLRRGVSCRMIDR) and 288–298 (YRKGNVFLAGD) contribute to the FAD site.

This sequence belongs to the PheA/TfdB FAD monooxygenase family. As to quaternary structure, homodimer. The cofactor is FAD.

It catalyses the reaction pentachlorophenol + NADPH + O2 + H(+) = 2,3,5,6-tetrachloro-1,4-benzoquinone + chloride + NADP(+) + H2O. The enzyme catalyses 2,3,5,6-tetrachlorophenol + NADPH + O2 = 2,3,5,6-tetrachlorohydroquinone + NADP(+) + H2O. Its pathway is xenobiotic degradation; pentachlorophenol degradation. Dechlorination of pentachlorophenol to tetrachlorobenzoquinone. Also removes hydrogen and nitro, amino, and cyano groups from benzene ring at the para position in relation to the hydroxyl of phenol. The chain is Pentachlorophenol 4-monooxygenase (pcpB) from Sphingobium chlorophenolicum.